Reading from the N-terminus, the 400-residue chain is Enoyl-[acyl-carrier-protein] reductase [NADH] (400 aa).

NAD(+) is bound by residues 48-53, 74-75, 111-112, and 139-140; these read GASTGY, FE, DA, and LA. Tyr225 contacts substrate. Tyr235 serves as the catalytic Proton donor. Residues Lys244 and 273 to 275 each bind NAD(+); that span reads VVT.

Belongs to the TER reductase family. In terms of assembly, monomer.

It carries out the reaction a 2,3-saturated acyl-[ACP] + NAD(+) = a (2E)-enoyl-[ACP] + NADH + H(+). The protein operates within lipid metabolism; fatty acid biosynthesis. Its function is as follows. Involved in the final reduction of the elongation cycle of fatty acid synthesis (FAS II). Catalyzes the reduction of a carbon-carbon double bond in an enoyl moiety that is covalently linked to an acyl carrier protein (ACP). The sequence is that of Enoyl-[acyl-carrier-protein] reductase [NADH] from Burkholderia ambifaria (strain ATCC BAA-244 / DSM 16087 / CCUG 44356 / LMG 19182 / AMMD) (Burkholderia cepacia (strain AMMD)).